The primary structure comprises 449 residues: Glucose-6-phosphate isomerase (449 aa).

The active-site Proton donor is the glutamate 291. Catalysis depends on residues histidine 312 and lysine 426.

This sequence belongs to the GPI family.

Its subcellular location is the cytoplasm. It carries out the reaction alpha-D-glucose 6-phosphate = beta-D-fructose 6-phosphate. It functions in the pathway carbohydrate biosynthesis; gluconeogenesis. It participates in carbohydrate degradation; glycolysis; D-glyceraldehyde 3-phosphate and glycerone phosphate from D-glucose: step 2/4. Its function is as follows. Catalyzes the reversible isomerization of glucose-6-phosphate to fructose-6-phosphate. This Streptococcus pyogenes serotype M2 (strain MGAS10270) protein is Glucose-6-phosphate isomerase.